Consider the following 161-residue polypeptide: Peripheral myelin protein 22 (161 aa).

A topological domain (cytoplasmic) is located at residue Met-1. A helical membrane pass occupies residues 2 to 31 (LLLLLGILFLHIAVLVLLFVSTIVSQWLVG). Residues 32–64 (NGHTTDLWQNCTTSALGAVQHCYSSSVSEWLQS) are Extracellular-facing. N-linked (GlcNAc...) asparagine glycosylation occurs at Asn-41. A helical transmembrane segment spans residues 65–91 (VQATMILSVIFSVLALFLFFCQLFTLT). Topologically, residues 92 to 95 (KGGR) are cytoplasmic. A helical membrane pass occupies residues 96–119 (FYITGFFQILAGLCVMSAAAIYTV). Over 120 to 133 (RHSEWHVNTDYSYG) the chain is Extracellular. Residues 134 to 156 (FAYILAWVAFPLALLSGIIYVIL) traverse the membrane as a helical segment. Topologically, residues 157–160 (RKRE) are cytoplasmic.

This sequence belongs to the PMP-22/EMP/MP20 family. In terms of processing, ubiquitinated by the DCX(DCAF13) E3 ubiquitin ligase complex, leading to its degradation. In terms of tissue distribution, schwann cells of the peripheral nervous system. Expressed at growth arrest of mammalian fibroblasts.

It is found in the cell membrane. Its function is as follows. Might be involved in growth regulation, and in myelinization in the peripheral nervous system. The polypeptide is Peripheral myelin protein 22 (Pmp22) (Mus musculus (Mouse)).